The following is a 1441-amino-acid chain: MAPLLGRRPFPLVKPLSEAATGEGEEEVYMIEHSKEAFRSREEYESRLERYAERIWTCKSTGSSQLTHKEAWDEEQEVAELLKEEFPVWYEKQVLEMVHHNTISLDKLVDQSWMEIMTKYADGEECDFEVGPEKYLRAKIVKVHPLEKEEQASEKKSEGSCDSPSSDKENSNKVAQDIQLKEESNRLESLSSLRESDRARRSPRKLPTSLKKEEKKWVPPKFLPHKYDVKLLNEDKVISFVPVDSLYRSERPPNKEILRYFIRHNALRIGTGENAPWVVEDELVKKYTLPSKFSDFLLDPHKYMTLNPSSATKRKSLGSPDQKPAKKSKKSPLSPSSWSLANLKKTAVNSSSSEEEMQLMIGANLNKKGSIGKKSDKKKPKNGKSQVLNGQKISAKTRSPKKGLKSPKLKQMTLLDMAKSTPKVSRAQKGGSNTPRSSSKPNKYLPPAALHLISYYRDNKNREDRKSALSALISKVARMLSAEDRKRLPDDLQELVQKRYELLEHRKQWAVMTEEQREEYMRKKREALKARIKEKTRERKQKEREERLEKQKRYEDQDLTGKSLPTFKLVDTPEGLPNALFGDVAMVIEFLSGYSDLLLPDGQYPVTAVSLMEALAAEKGGFMYLNRGLVVLLQTLLQDEIAEDYGELGMKLSEIPLTLHSASELVRLCLRKSDSPAGENESIEKGDEDSEGSAVYQDDEVEDEYLEKLETSEFFELTTEEKLHILAALCHRILMTYSVQDHVDAKQQRSGELWKERLAILKGENDKKRAAKQKRKEQGTVKPKEEVQAAKIVKKQEKINTQQDNDAEDMISAVKSRRLQAMQAKKEKEEHEKLTKERIERETEEERSRKQKASAEKAFHEGIAKAKLVLRRSPLGTDRNHNRYWLFSDEVPGLYIEKGWVHDSINYRFSPESKQDSEQDAEESEDANSSIGCPDDSTQREEKHAETTVPKQGQNLWFLCDTQKELDELLDSLHPQGFRESQLKERLQNRYQDIMHSIHLARKQNLGLKTCDGQQELLNFLRSDIIEVATRLQKGGLGYLDDTTEFEAKVRTFENLKDFGECIVFLQAAVIKKFLQGFMAPKQKKRKHQSEEAAAKAEEQDEEKKMAEEAKVASAVEKWKVAIRDAQTFSRMHVLLGMLDACIKWDMSSENARCKVCRKKGEDDKLILCDECNKAFHLFCLRPVLFNIPDGEWLCPACQPATARRSSRGRNYAEDSTQDEDEEEEEEESEEEEEEESDEEEEEQEMMGQRLRSRKAAKGKPGRPTRRGRPPKNNTHSRVSRQRYVEDTEADVEEMVRQSKPTSRRQNQEFQKCEEILAKLIKYRFSWPFREPFNADEIEDYTKVVTTPMDFQTMQSKCSCGSYQTVQEFLNDLKLVFGNTELYYEAGSSQLSCLEKTEQCARDLLGKHLPAHTYQRRHRKHQSPEPEPETANPGRGRKQKK.

The 107-residue stretch at 26-132 (EEVYMIEHSK…GEECDFEVGP (107 aa)) folds into the WAC domain. Over residues 147-171 (EKEEQASEKKSEGSCDSPSSDKENS) the composition is skewed to basic and acidic residues. Disordered regions lie at residues 147-212 (EKEE…SLKK), 307-338 (NPSS…PSSW), 364-445 (NLNK…NKYL), and 531-555 (RIKE…KRYE). The span at 386-397 (QVLNGQKISAKT) shows a compositional bias: polar residues. Residues 398 to 408 (RSPKKGLKSPK) show a composition bias toward basic residues. Residues 430-441 (GGSNTPRSSSKP) are compositionally biased toward polar residues. Residues 513–558 (TEEQREEYMRKKREALKARIKEKTRERKQKEREERLEKQKRYEDQD) adopt a coiled-coil conformation. In terms of domain architecture, DDT spans 578–642 (NALFGDVAMV…LQTLLQDEIA (65 aa)). Disordered stretches follow at residues 675–696 (SPAG…SAVY), 766–785 (DKKR…KPKE), 823–858 (QAKK…AEKA), and 911–949 (PESK…ETTV). Positions 686-696 (GDEDSEGSAVY) are enriched in acidic residues. Basic and acidic residues-rich tracts occupy residues 776–785 (KEQGTVKPKE), 824–858 (AKKE…AEKA), and 937–946 (STQREEKHAE). Residues 813-861 (AVKSRRLQAMQAKKEKEEHEKLTKERIERETEEERSRKQKASAEKAFHE) adopt a coiled-coil conformation. Positions 1080-1113 (APKQKKRKHQSEEAAAKAEEQDEEKKMAEEAKVA) form a coiled coil. Residues 1151 to 1201 (NARCKVCRKKGEDDKLILCDECNKAFHLFCLRPVLFNIPDGEWLCPACQPA) form a PHD-type zinc finger. Disordered stretches follow at residues 1204–1308 (RRSS…RQNQ) and 1408–1441 (HLPA…KQKK). Residues 1213–1253 (AEDSTQDEDEEEEEEESEEEEEEESDEEEEEQEMMGQRLRS) are a coiled coil. Over residues 1216-1245 (STQDEDEEEEEEESEEEEEEESDEEEEEQE) the composition is skewed to acidic residues. The segment covering 1251-1270 (LRSRKAAKGKPGRPTRRGRP) has biased composition (basic residues). Residues 1299 to 1308 (SKPTSRRQNQ) show a composition bias toward polar residues. The 105-residue stretch at 1304-1408 (RRQNQEFQKC…QCARDLLGKH (105 aa)) folds into the Bromo domain.

It belongs to the WAL family. BAZ1B subfamily. Interacts with smarca5/snf2h; the interaction is direct and forms the WICH complex. Component of the B-WICH complex. Mn(2+) is required as a cofactor. As to expression, highly expressed in the neural tube.

It localises to the nucleus. The enzyme catalyses L-tyrosyl-[protein] + ATP = O-phospho-L-tyrosyl-[protein] + ADP + H(+). Its function is as follows. Atypical tyrosine-protein kinase that plays a central role in chromatin remodeling and acts as a transcription regulator. Involved in DNA damage response by phosphorylating 'Tyr-142' of histone H2AX (H2AXY142ph). H2AXY142ph plays a central role in DNA repair and acts as a mark that distinguishes between apoptotic and repair responses to genotoxic stress. Essential component of the WICH complex, a chromatin remodeling complex that mobilizes nucleosomes and reconfigures irregular chromatin to a regular nucleosomal array structure. The WICH complex regulates the transcription of various genes, has a role in RNA polymerase I and RNA polymerase III transcription, mediates the histone H2AX phosphorylation at 'Tyr-142', and is involved in the maintenance of chromatin structures during DNA replication processes. This Xenopus laevis (African clawed frog) protein is Tyrosine-protein kinase BAZ1B (baz1b).